The following is a 414-amino-acid chain: Glutamyl-tRNA reductase (414 aa).

Residues 49–52, S108, 113–115, and Q119 contribute to the substrate site; these read TCNR and EPQ. C50 acts as the Nucleophile in catalysis. Residue 188–193 participates in NADP(+) binding; sequence GAGQTG.

The protein belongs to the glutamyl-tRNA reductase family. As to quaternary structure, homodimer.

The catalysed reaction is (S)-4-amino-5-oxopentanoate + tRNA(Glu) + NADP(+) = L-glutamyl-tRNA(Glu) + NADPH + H(+). Its pathway is porphyrin-containing compound metabolism; protoporphyrin-IX biosynthesis; 5-aminolevulinate from L-glutamyl-tRNA(Glu): step 1/2. In terms of biological role, catalyzes the NADPH-dependent reduction of glutamyl-tRNA(Glu) to glutamate 1-semialdehyde (GSA). This is Glutamyl-tRNA reductase from Francisella philomiragia subsp. philomiragia (strain ATCC 25017 / CCUG 19701 / FSC 153 / O#319-036).